A 373-amino-acid polypeptide reads, in one-letter code: Queuine tRNA-ribosyltransferase (373 aa).

D93 acts as the Proton acceptor in catalysis. Substrate is bound by residues 93 to 97, D147, Q191, and G218; that span reads DSGGF. The interval 249–255 is RNA binding; the sequence is GVGAPRD. D268 acts as the Nucleophile in catalysis. The RNA binding; important for wobble base 34 recognition stretch occupies residues 273 to 277; the sequence is TRNAR. Zn(2+)-binding residues include C306, C308, C311, and H337.

The protein belongs to the queuine tRNA-ribosyltransferase family. Homodimer. Within each dimer, one monomer is responsible for RNA recognition and catalysis, while the other monomer binds to the replacement base PreQ1. It depends on Zn(2+) as a cofactor.

It catalyses the reaction 7-aminomethyl-7-carbaguanine + guanosine(34) in tRNA = 7-aminomethyl-7-carbaguanosine(34) in tRNA + guanine. It participates in tRNA modification; tRNA-queuosine biosynthesis. Its function is as follows. Catalyzes the base-exchange of a guanine (G) residue with the queuine precursor 7-aminomethyl-7-deazaguanine (PreQ1) at position 34 (anticodon wobble position) in tRNAs with GU(N) anticodons (tRNA-Asp, -Asn, -His and -Tyr). Catalysis occurs through a double-displacement mechanism. The nucleophile active site attacks the C1' of nucleotide 34 to detach the guanine base from the RNA, forming a covalent enzyme-RNA intermediate. The proton acceptor active site deprotonates the incoming PreQ1, allowing a nucleophilic attack on the C1' of the ribose to form the product. After dissociation, two additional enzymatic reactions on the tRNA convert PreQ1 to queuine (Q), resulting in the hypermodified nucleoside queuosine (7-(((4,5-cis-dihydroxy-2-cyclopenten-1-yl)amino)methyl)-7-deazaguanosine). This Solidesulfovibrio magneticus (strain ATCC 700980 / DSM 13731 / RS-1) (Desulfovibrio magneticus) protein is Queuine tRNA-ribosyltransferase.